The primary structure comprises 448 residues: UPF0210 protein Pars_1033 (448 aa).

Belongs to the UPF0210 family.

This Pyrobaculum arsenaticum (strain DSM 13514 / JCM 11321 / PZ6) protein is UPF0210 protein Pars_1033.